The following is a 245-amino-acid chain: MSLRSDLINALYDENQKYDVCGIISAEGKIYPLGSDTKVLSTIFELFSRPIINKIAEKHGYIVEEPKQQNHYPDFTLYKPSEPNKKIAIDIKTTYTNKENEKIKFTLGGYTSFIRNNTKNIVYPFDQYIAHWIIGYVYTRVATRKSSLKTYNINELNEIPKPYKGVKVFLQDKWVIAGDLAGSGNTTNIGSIHAHYKDFVEGKGIFDSEDEFLDYWRNYERTSQLRNDKYNNISEYRNWIYRGRK.

Positions 45, 74, and 90 each coordinate Mg(2+). Residues aspartate 74, aspartate 90, and lysine 92 contribute to the active site.

In terms of assembly, homodimer. The cofactor is Mg(2+).

The catalysed reaction is Endonucleolytic cleavage of DNA to give specific double-stranded fragments with terminal 5'-phosphates.. In terms of biological role, a P subtype restriction enzyme that recognizes the double-stranded sequence 5'-GATATC-3' and cleaves after T-3. The protein is Type II restriction enzyme EcoRV (ecoRVR) of Escherichia coli.